The primary structure comprises 334 residues: Ferredoxin--NADP reductase (334 aa).

Asp-33, Gln-41, Tyr-46, Ala-86, Phe-120, Asp-286, and Thr-327 together coordinate FAD.

This sequence belongs to the ferredoxin--NADP reductase type 2 family. In terms of assembly, homodimer. The cofactor is FAD.

The enzyme catalyses 2 reduced [2Fe-2S]-[ferredoxin] + NADP(+) + H(+) = 2 oxidized [2Fe-2S]-[ferredoxin] + NADPH. This is Ferredoxin--NADP reductase from Rickettsia massiliae (strain Mtu5).